The following is a 931-amino-acid chain: DNA mismatch repair protein MutS (931 aa).

Positions 1–10 are enriched in low complexity; it reads MMDDTAMPAR. Residues 1-34 are disordered; that stretch reads MMDDTAMPARAEADAAEDELAAPAGIDRTAKADK. 674 to 681 is a binding site for ATP; the sequence is GPNMAGKS.

It belongs to the DNA mismatch repair MutS family.

Functionally, this protein is involved in the repair of mismatches in DNA. It is possible that it carries out the mismatch recognition step. This protein has a weak ATPase activity. The polypeptide is DNA mismatch repair protein MutS (Azorhizobium caulinodans (strain ATCC 43989 / DSM 5975 / JCM 20966 / LMG 6465 / NBRC 14845 / NCIMB 13405 / ORS 571)).